Here is a 182-residue protein sequence, read N- to C-terminus: ATP-dependent protease subunit HslV (182 aa).

The active site involves Thr10. The Na(+) site is built by Ala166, Cys169, and Ser172.

The protein belongs to the peptidase T1B family. HslV subfamily. In terms of assembly, a double ring-shaped homohexamer of HslV is capped on each side by a ring-shaped HslU homohexamer. The assembly of the HslU/HslV complex is dependent on binding of ATP.

It is found in the cytoplasm. The enzyme catalyses ATP-dependent cleavage of peptide bonds with broad specificity.. Allosterically activated by HslU binding. Protease subunit of a proteasome-like degradation complex believed to be a general protein degrading machinery. The chain is ATP-dependent protease subunit HslV from Rickettsia bellii (strain OSU 85-389).